The following is a 510-amino-acid chain: Archaeal glutamate synthase [NADPH] (510 aa).

4Fe-4S ferredoxin-type domains lie at 10–37 (YKVE…YRRE) and 38–68 (GDRI…IKEN). Cys-19, Cys-22, Cys-25, Cys-29, Cys-48, Cys-51, Cys-54, and Cys-58 together coordinate [4Fe-4S] cluster.

This sequence belongs to the glutamate synthase family. The cofactor is FMN.

The catalysed reaction is 2 L-glutamate + NADP(+) = L-glutamine + 2-oxoglutarate + NADPH + H(+). The protein is Archaeal glutamate synthase [NADPH] of Methanocaldococcus jannaschii (strain ATCC 43067 / DSM 2661 / JAL-1 / JCM 10045 / NBRC 100440) (Methanococcus jannaschii).